A 526-amino-acid chain; its full sequence is Rho guanine nucleotide exchange factor 3 (526 aa).

A disordered region spans residues 20 to 40 (ELPPASGPAKDAEEPSNKRVK). Residues S47 and S70 each carry the phosphoserine modification. Positions 122–304 (KRQEAIFELS…QGIVAEINTK (183 aa)) constitute a DH domain. The 159-residue stretch at 291–449 (INIIQGIVAE…WLNCIRQAKE (159 aa)) folds into the PH domain. Positions 464-526 (EGSFLNPTTG…GNSRHGESNV (63 aa)) are disordered. A compositionally biased stretch (polar residues) spans 466-475 (SFLNPTTGSR).

In terms of assembly, interacts with RHOA and RHOB. As to expression, widely expressed. Highest levels are found in adult brain and skeletal muscle. Lower levels are found in heart and kidney.

Its subcellular location is the cytoplasm. Its function is as follows. Acts as a guanine nucleotide exchange factor (GEF) for RhoA and RhoB GTPases. This Homo sapiens (Human) protein is Rho guanine nucleotide exchange factor 3 (ARHGEF3).